A 440-amino-acid chain; its full sequence is VGFKAGVKDYRLTYYTPGYKTKDTDILAAFRMTPQPGVPAEEAGAAVAAESSTGTWTTVWTDGXTSLDRYKGRCYDIEPVAGEENQYIAYVAYPLDLFEEGSVTNLFTSIVGNVFGFKALRALRLEDLRIPPAYSKTFIGPPHGIQVERDKLNKYGRPLLGCTIKPKLGLSAKNYGRAVYEYLRGGLDFTKDDENVNSQPFMRWRDRFLFVAEALFKSQAETGEIKGHYLNATAGTCEEMLKRAVFARELGAPIVMHDYLTGGFTANTSLAYYCRDNGLLLHIHRAMHAVIDRQRNHGIHFRVLAKALRMSGGDHIHAGTVVGKLEGEREVTLGFVDLLRDDYIEKDRSRGIYFTQDWVSMPGVHPVASGGIHVWHMPALTEIFGDDSVLQFGGGTLGHPWGNAPGAVANRVALEACVQARNEGRDLAREGNEVXREACK.

Residue Lys-4 is modified to N6,N6,N6-trimethyllysine. Residues Asn-113 and Thr-163 each coordinate substrate. The active-site Proton acceptor is the Lys-165. Lys-167 contributes to the substrate binding site. Lys-191, Asp-193, and Glu-194 together coordinate Mg(2+). At Lys-191 the chain carries N6-carboxylysine. Residue His-284 is the Proton acceptor of the active site. Positions 285, 317, and 369 each coordinate substrate.

It belongs to the RuBisCO large chain family. Type I subfamily. As to quaternary structure, heterohexadecamer of 8 large chains and 8 small chains; disulfide-linked. The disulfide link is formed within the large subunit homodimers. Mg(2+) is required as a cofactor. In terms of processing, the disulfide bond which can form in the large chain dimeric partners within the hexadecamer appears to be associated with oxidative stress and protein turnover.

The protein localises to the plastid. It is found in the chloroplast. The enzyme catalyses 2 (2R)-3-phosphoglycerate + 2 H(+) = D-ribulose 1,5-bisphosphate + CO2 + H2O. The catalysed reaction is D-ribulose 1,5-bisphosphate + O2 = 2-phosphoglycolate + (2R)-3-phosphoglycerate + 2 H(+). Its function is as follows. RuBisCO catalyzes two reactions: the carboxylation of D-ribulose 1,5-bisphosphate, the primary event in carbon dioxide fixation, as well as the oxidative fragmentation of the pentose substrate in the photorespiration process. Both reactions occur simultaneously and in competition at the same active site. The protein is Ribulose bisphosphate carboxylase large chain of Polystichum munitum (Western sword-fern).